A 354-amino-acid polypeptide reads, in one-letter code: Diaminopimelate epimerase, chloroplastic (354 aa).

The N-terminal 44 residues, 1 to 44 (MSSATAAATATIAAAAAKLAATPAPAPSRRRLTLRGNPTARRCV), are a transit peptide targeting the chloroplast. Catalysis depends on residues C142 and C297.

Belongs to the diaminopimelate epimerase family.

The protein resides in the plastid. It localises to the chloroplast. The enzyme catalyses (2S,6S)-2,6-diaminopimelate = meso-2,6-diaminopimelate. It functions in the pathway amino-acid biosynthesis; L-lysine biosynthesis via DAP pathway; DL-2,6-diaminopimelate from LL-2,6-diaminopimelate: step 1/1. The polypeptide is Diaminopimelate epimerase, chloroplastic (DAPF) (Oryza sativa subsp. japonica (Rice)).